A 156-amino-acid polypeptide reads, in one-letter code: Ribosomal RNA large subunit methyltransferase H (156 aa).

S-adenosyl-L-methionine is bound by residues Gly104 and 123–128 (LSAMTL).

It belongs to the RNA methyltransferase RlmH family. Homodimer.

It localises to the cytoplasm. The enzyme catalyses pseudouridine(1915) in 23S rRNA + S-adenosyl-L-methionine = N(3)-methylpseudouridine(1915) in 23S rRNA + S-adenosyl-L-homocysteine + H(+). Specifically methylates the pseudouridine at position 1915 (m3Psi1915) in 23S rRNA. The polypeptide is Ribosomal RNA large subunit methyltransferase H (Chromobacterium violaceum (strain ATCC 12472 / DSM 30191 / JCM 1249 / CCUG 213 / NBRC 12614 / NCIMB 9131 / NCTC 9757 / MK)).